The chain runs to 361 residues: Deoxyhypusine hydroxylase (361 aa).

HEAT-like PBS-type repeat units lie at residues 59–85 (LKHELAYVLGQLLNTRALPTLSRVLEN), 94–120 (VRHEAAEALGAIGAEESLPILRKYMQD), 183–211 (QRYRAMFALRDFGAGSKEAVEALADGFRD), and 216–242 (FRHEIAYIFGQLSSPYSIPSLLSRLRD). Residues His-61, Glu-62, His-96, and Glu-97 each contribute to the Fe cation site. The Fe cation site is built by His-218, Glu-219, His-251, and Glu-252.

This sequence belongs to the deoxyhypusine hydroxylase family. It depends on Fe(2+) as a cofactor.

It localises to the cytoplasm. Its subcellular location is the nucleus. The catalysed reaction is [eIF5A protein]-deoxyhypusine + AH2 + O2 = [eIF5A protein]-hypusine + A + H2O. The protein operates within protein modification; eIF5A hypusination. Catalyzes the hydroxylation of the N(6)-(4-aminobutyl)-L-lysine intermediate to form hypusine, an essential post-translational modification only found in mature eIF-5A factor. This Cryptococcus neoformans var. neoformans serotype D (strain B-3501A) (Filobasidiella neoformans) protein is Deoxyhypusine hydroxylase.